We begin with the raw amino-acid sequence, 296 residues long: Protein FAM110A (296 aa).

Disordered regions lie at residues 61-97 (NTRQ…PCSG) and 117-192 (PVSP…KSDL). 2 stretches are compositionally biased toward pro residues: residues 139-148 (PATPPRPPPS) and 161-170 (PASPARPYPS).

This sequence belongs to the FAM110 family. May interact with CSPP1.

It is found in the cytoplasm. The protein localises to the cytoskeleton. It localises to the microtubule organizing center. Its subcellular location is the centrosome. The protein resides in the spindle pole. The protein is Protein FAM110A (Fam110a) of Mus musculus (Mouse).